Here is a 318-residue protein sequence, read N- to C-terminus: Formimidoylglutamase (318 aa).

Residues His124, Asp153, His155, Asp157, Cys241, and Asp243 each contribute to the Mn(2+) site.

Belongs to the arginase family. It depends on Mn(2+) as a cofactor.

It catalyses the reaction N-formimidoyl-L-glutamate + H2O = formamide + L-glutamate. It participates in amino-acid degradation; L-histidine degradation into L-glutamate; L-glutamate from N-formimidoyl-L-glutamate (hydrolase route): step 1/1. Catalyzes the conversion of N-formimidoyl-L-glutamate to L-glutamate and formamide. The polypeptide is Formimidoylglutamase (Fusobacterium nucleatum subsp. nucleatum (strain ATCC 25586 / DSM 15643 / BCRC 10681 / CIP 101130 / JCM 8532 / KCTC 2640 / LMG 13131 / VPI 4355)).